We begin with the raw amino-acid sequence, 1465 residues long: Gag-Pol polyprotein (1465 aa).

Residue G2 is the site of N-myristoyl glycine; by host attachment. An interaction with Gp41 region spans residues 7-31 (VLSGKKTDELEKVRLRPGGKKKYML). The Nuclear export signal signature appears at 16–22 (LEKVRLR). Residues 26-32 (KKKYMLK) carry the Nuclear localization signal motif. Residues 105–114 (QRHLAADTEK) show a composition bias toward basic and acidic residues. The interval 105 to 129 (QRHLAADTEKMPATNKPTAPPSGGN) is disordered. Y130 carries the phosphotyrosine; by host modification. The tract at residues 186–223 (NCVGEHQAAMQIIREIINEEAADWDQQHPSPGPMPAGQ) is interaction with human PPIA/CYPA and NUP153. The interval 274–360 (YNPTNILDIK…GGPGQKARLM (87 aa)) is dimerization/Multimerization of capsid protein p24. 2 consecutive CCHC-type zinc fingers follow at residues 388 to 405 (VTCWNCGKQGHTARQCRA) and 409 to 426 (QGCWKCGKTGHIMSKCPE). Residues 441 to 508 (ASQLPHDPSA…PRETLQGGDR (68 aa)) form a disordered region. Positions 484–501 (DAEKLHADGETTEREPRE) are enriched in basic and acidic residues. The interval 513–517 (PQFSL) is dimerization of protease. Residues 532–601 (VEVLLDTGVD…TPINIFGRNI (70 aa)) enclose the Peptidase A2 domain. D537 (for protease activity; shared with dimeric partner) is an active-site residue. Dimerization of protease stretches follow at residues 561–567 (GIGGFIN) and 600–612 (NILNTLGMTLNFP). Residues 655 to 844 (EGQLEEAPPT…PPFKWMGYEL (190 aa)) enclose the Reverse transcriptase domain. Residues D720, D795, and D796 each coordinate Mg(2+). Residues 837–845 (FKWMGYELW) form an RT 'primer grip' region. A Tryptophan repeat motif motif is present at residues 1007-1023 (WDQWWTDYWQVTWIPEW). Residues 1043-1166 (LEGRETYYTD…VDHLVSQGIR (124 aa)) enclose the RNase H type-1 domain. Residues D1052, E1087, D1107, and D1158 each coordinate Mg(2+). The Integrase-type zinc finger occupies 1172–1213 (EKIEPAQEEHEKYHGNVKELVHKFGIPQLVAKQIVNSCDKCQ). Positions 1181, 1185, 1209, and 1212 each coordinate Zn(2+). Residues 1222 to 1373 (QVNADLGTWQ…TPAERLVNMI (152 aa)) form the Integrase catalytic domain. Mg(2+) contacts are provided by D1233, D1285, and E1321. A DNA-binding region (integrase-type) is located at residues 1392-1439 (FQVYYREGRDQLWKGPGELLWKGEGAVIIKVGTEIKVVPRRKAKIIRH).

Homotrimer; further assembles as hexamers of trimers. Interacts with gp41 (via C-terminus). Interacts with host CALM1; this interaction induces a conformational change in the Matrix protein, triggering exposure of the myristate group. Interacts with host AP3D1; this interaction allows the polyprotein trafficking to multivesicular bodies during virus assembly. Part of the pre-integration complex (PIC) which is composed of viral genome, matrix protein, Vpr and integrase. As to quaternary structure, homodimer; the homodimer further multimerizes as homohexamers or homopentamers. Interacts with human PPIA/CYPA. Interacts with human NUP153. Interacts with host PDZD8; this interaction stabilizes the capsid. Interacts with monkey TRIM5; this interaction destabilizes the capsid. In terms of assembly, homodimer, whose active site consists of two apposed aspartic acid residues. Heterodimer of p66 RT and p51 RT (RT p66/p51). Heterodimerization of RT is essential for DNA polymerase activity. The overall folding of the subdomains is similar in p66 RT and p51 RT but the spatial arrangements of the subdomains are dramatically different. As to quaternary structure, homotetramer; may further associate as a homohexadecamer. Part of the pre-integration complex (PIC) which is composed of viral genome, matrix protein, Vpr and integrase. Interacts with human SMARCB1/INI1 and human PSIP1/LEDGF isoform 1. Interacts with human KPNA3; this interaction might play a role in nuclear import of the pre-integration complex. Interacts with human NUP153; this interaction might play a role in nuclear import of the pre-integration complex. Mg(2+) serves as cofactor. Specific enzymatic cleavages by the viral protease yield mature proteins. The protease is released by autocatalytic cleavage. The polyprotein is cleaved during and after budding, this process is termed maturation. Proteolytic cleavage of p66 RT removes the RNase H domain to yield the p51 RT subunit. Nucleocapsid protein p7 might be further cleaved after virus entry.

Its subcellular location is the host cell membrane. The protein resides in the host endosome. The protein localises to the host multivesicular body. It is found in the virion membrane. It localises to the host nucleus. Its subcellular location is the host cytoplasm. The protein resides in the virion. It carries out the reaction Endopeptidase for which the P1 residue is preferably hydrophobic.. The catalysed reaction is Endohydrolysis of RNA in RNA/DNA hybrids. Three different cleavage modes: 1. sequence-specific internal cleavage of RNA. Human immunodeficiency virus type 1 and Moloney murine leukemia virus enzymes prefer to cleave the RNA strand one nucleotide away from the RNA-DNA junction. 2. RNA 5'-end directed cleavage 13-19 nucleotides from the RNA end. 3. DNA 3'-end directed cleavage 15-20 nucleotides away from the primer terminus.. It catalyses the reaction 3'-end directed exonucleolytic cleavage of viral RNA-DNA hybrid.. The enzyme catalyses DNA(n) + a 2'-deoxyribonucleoside 5'-triphosphate = DNA(n+1) + diphosphate. Its activity is regulated as follows. Protease: The viral protease is inhibited by many synthetic protease inhibitors (PIs), such as amprenavir, atazanavir, indinavir, loprinavir, nelfinavir, ritonavir and saquinavir. Use of protease inhibitors in tritherapy regimens permit more ambitious therapeutic strategies. Reverse transcriptase/ribonuclease H: RT can be inhibited either by nucleoside RT inhibitors (NRTIs) or by non nucleoside RT inhibitors (NNRTIs). NRTIs act as chain terminators, whereas NNRTIs inhibit DNA polymerization by binding a small hydrophobic pocket near the RT active site and inducing an allosteric change in this region. Classical NRTIs are abacavir, adefovir (PMEA), didanosine (ddI), lamivudine (3TC), stavudine (d4T), tenofovir (PMPA), zalcitabine (ddC), and zidovudine (AZT). Classical NNRTIs are atevirdine (BHAP U-87201E), delavirdine, efavirenz (DMP-266), emivirine (I-EBU), and nevirapine (BI-RG-587). The tritherapies used as a basic effective treatment of AIDS associate two NRTIs and one NNRTI. Functionally, mediates, with Gag polyprotein, the essential events in virion assembly, including binding the plasma membrane, making the protein-protein interactions necessary to create spherical particles, recruiting the viral Env proteins, and packaging the genomic RNA via direct interactions with the RNA packaging sequence (Psi). Gag-Pol polyprotein may regulate its own translation, by the binding genomic RNA in the 5'-UTR. At low concentration, the polyprotein would promote translation, whereas at high concentration, the polyprotein would encapsidate genomic RNA and then shut off translation. Targets the polyprotein to the plasma membrane via a multipartite membrane-binding signal, that includes its myristoylated N-terminus. Matrix protein is part of the pre-integration complex. Implicated in the release from host cell mediated by Vpu. Binds to RNA. Its function is as follows. Forms the conical core that encapsulates the genomic RNA-nucleocapsid complex in the virion. Most core are conical, with only 7% tubular. The core is constituted by capsid protein hexamer subunits. The core is disassembled soon after virion entry. Host restriction factors such as TRIM5-alpha or TRIMCyp bind retroviral capsids and cause premature capsid disassembly, leading to blocks in reverse transcription. Capsid restriction by TRIM5 is one of the factors which restricts HIV-1 to the human species. Host PIN1 apparently facilitates the virion uncoating. On the other hand, interactions with PDZD8 or CYPA stabilize the capsid. In terms of biological role, encapsulates and protects viral dimeric unspliced genomic RNA (gRNA). Binds these RNAs through its zinc fingers. Acts as a nucleic acid chaperone which is involved in rearangement of nucleic acid secondary structure during gRNA retrotranscription. Also facilitates template switch leading to recombination. As part of the polyprotein, participates in gRNA dimerization, packaging, tRNA incorporation and virion assembly. Functionally, aspartyl protease that mediates proteolytic cleavages of Gag and Gag-Pol polyproteins during or shortly after the release of the virion from the plasma membrane. Cleavages take place as an ordered, step-wise cascade to yield mature proteins. This process is called maturation. Displays maximal activity during the budding process just prior to particle release from the cell. Also cleaves Nef and Vif, probably concomitantly with viral structural proteins on maturation of virus particles. Hydrolyzes host EIF4GI and PABP1 in order to shut off the capped cellular mRNA translation. The resulting inhibition of cellular protein synthesis serves to ensure maximal viral gene expression and to evade host immune response. Multifunctional enzyme that converts the viral RNA genome into dsDNA in the cytoplasm, shortly after virus entry into the cell. This enzyme displays a DNA polymerase activity that can copy either DNA or RNA templates, and a ribonuclease H (RNase H) activity that cleaves the RNA strand of RNA-DNA heteroduplexes in a partially processive 3' to 5' endonucleasic mode. Conversion of viral genomic RNA into dsDNA requires many steps. A tRNA(3)-Lys binds to the primer-binding site (PBS) situated at the 5'-end of the viral RNA. RT uses the 3' end of the tRNA primer to perform a short round of RNA-dependent minus-strand DNA synthesis. The reading proceeds through the U5 region and ends after the repeated (R) region which is present at both ends of viral RNA. The portion of the RNA-DNA heteroduplex is digested by the RNase H, resulting in a ssDNA product attached to the tRNA primer. This ssDNA/tRNA hybridizes with the identical R region situated at the 3' end of viral RNA. This template exchange, known as minus-strand DNA strong stop transfer, can be either intra- or intermolecular. RT uses the 3' end of this newly synthesized short ssDNA to perform the RNA-dependent minus-strand DNA synthesis of the whole template. RNase H digests the RNA template except for two polypurine tracts (PPTs) situated at the 5'-end and near the center of the genome. It is not clear if both polymerase and RNase H activities are simultaneous. RNase H probably can proceed both in a polymerase-dependent (RNA cut into small fragments by the same RT performing DNA synthesis) and a polymerase-independent mode (cleavage of remaining RNA fragments by free RTs). Secondly, RT performs DNA-directed plus-strand DNA synthesis using the PPTs that have not been removed by RNase H as primers. PPTs and tRNA primers are then removed by RNase H. The 3' and 5' ssDNA PBS regions hybridize to form a circular dsDNA intermediate. Strand displacement synthesis by RT to the PBS and PPT ends produces a blunt ended, linear dsDNA copy of the viral genome that includes long terminal repeats (LTRs) at both ends. Its function is as follows. Catalyzes viral DNA integration into the host chromosome, by performing a series of DNA cutting and joining reactions. This enzyme activity takes place after virion entry into a cell and reverse transcription of the RNA genome in dsDNA. The first step in the integration process is 3' processing. This step requires a complex comprising the viral genome, matrix protein, Vpr and integrase. This complex is called the pre-integration complex (PIC). The integrase protein removes 2 nucleotides from each 3' end of the viral DNA, leaving recessed CA OH's at the 3' ends. In the second step, the PIC enters cell nucleus. This process is mediated through integrase and Vpr proteins, and allows the virus to infect a non dividing cell. This ability to enter the nucleus is specific of lentiviruses, other retroviruses cannot and rely on cell division to access cell chromosomes. In the third step, termed strand transfer, the integrase protein joins the previously processed 3' ends to the 5' ends of strands of target cellular DNA at the site of integration. The 5'-ends are produced by integrase-catalyzed staggered cuts, 5 bp apart. A Y-shaped, gapped, recombination intermediate results, with the 5'-ends of the viral DNA strands and the 3' ends of target DNA strands remaining unjoined, flanking a gap of 5 bp. The last step is viral DNA integration into host chromosome. This involves host DNA repair synthesis in which the 5 bp gaps between the unjoined strands are filled in and then ligated. Since this process occurs at both cuts flanking the HIV genome, a 5 bp duplication of host DNA is produced at the ends of HIV-1 integration. Alternatively, Integrase may catalyze the excision of viral DNA just after strand transfer, this is termed disintegration. In Human immunodeficiency virus type 2 subtype B (isolate D205) (HIV-2), this protein is Gag-Pol polyprotein (gag-pol).